The sequence spans 177 residues: Transcription termination/antitermination protein NusG (177 aa).

Residues 126 to 156 (PGETVRVIDGPFADFNGVVEEVNYEKSRIQV) form the KOW domain.

The protein belongs to the NusG family.

In terms of biological role, participates in transcription elongation, termination and antitermination. The polypeptide is Transcription termination/antitermination protein NusG (Pseudomonas aeruginosa (strain ATCC 15692 / DSM 22644 / CIP 104116 / JCM 14847 / LMG 12228 / 1C / PRS 101 / PAO1)).